A 414-amino-acid polypeptide reads, in one-letter code: Phosphoglycerate kinase (414 aa).

Substrate contacts are provided by residues 20–22, Arg-37, 60–63, Arg-117, and Arg-164; these read DIN and HQSR. Residues Glu-338 and 364-367 contribute to the ATP site; that span reads GGHL.

It belongs to the phosphoglycerate kinase family. As to quaternary structure, monomer.

The protein localises to the cytoplasm. It carries out the reaction (2R)-3-phosphoglycerate + ATP = (2R)-3-phospho-glyceroyl phosphate + ADP. Its pathway is carbohydrate degradation; glycolysis; pyruvate from D-glyceraldehyde 3-phosphate: step 2/5. The chain is Phosphoglycerate kinase from Methanococcus maripaludis (strain DSM 14266 / JCM 13030 / NBRC 101832 / S2 / LL).